The sequence spans 1294 residues: MAMGDDKSFDDEESVDGNRPSSAASAFKVPAPKTSGNPANSARKPGSAGGPKVGGASKEGGAGAVDEDDFIKAFTDVPSIQIYSSRELEETLNKIREILSDDKHDWDQRANALKKIRSLLVAGAAQYDCFFQHLRLLDGALKLSAKDLRSQVVREACITVAHLSTVLGNKFDHGAEAIVPTLFNLVPNSAKVMATSGCAAIRFIIRHTHVPRLIPLITSNCTSKSVPVRRRSFEFLDLLLQEWQTHSLERHAAVLVETIKKGIHDADAEARVEARKTYMGLRNHFPGEAETLYNSLEPSYQKSLQTYLKSSGSVASLPQSDRSSSSSQESLNRPFSSKWSTANPSTVAGRVSAGSSKASSLPGSLQRSRSDIDVNAAAGAKAHHAAGQSVRSGRLGAGALNAGSYASLEDTSDKLDGTASEDGRVRAKLSAPLAGMGNAKADSRGRSRTKMVSQSQPGSRSGSPGRVLTTTALSTVSSGVQRVLVNSASAQKRSKIPRSQGCSREASPSRLSVARSSRIPRPSVSQGCSREASRESSRDTSPVRSFQPLASRHHSRSTGALYAPEVYGASGPGYGISQSSRLSSSVSAMRVLNTGSDVEEAVADALKKPARRRYESYGMHSDDDANSDASSACSERSYSSRNGSIPTYMRQTEDVAEVLNRCASSNWSERKEGLLGLQNLLKNQRTLSRVELKRLCEIFTRMFADPHGKRVFSMFLETLVDFIQVHKDDLQDWLFVLLTQLLKKMGADLLGSVQAKVQKALDVTRESFPNDLQFNILMRFTVDQTQTPSLKVKVAILKYIETLAKQMDPGDFINSSETRLAVSRVITWTTEPKSSDVRKAAQSVLISLFELNTPEFTMLLGALPKTFQDGATKLLHNHLRNTGNGTQSSMGSPLTRPTPRSPANWSSPLTSPTNTSQNTLSPSAFDYDTENMNSEDIYSSLRGVTEAIQNFSFRSQEDMNEPLKRDSKKDDGDSMCGGPGMSDPRAGGDATDSSQTALDNKASLLHSMPTHSSPRSRDYNPYNYSDSISPFNKSALKEAMFDDDADQFPDDLSLDHSDLVAELLKELSNHNERVEERKIALYELMKLTQEESFSVWDEHFKTILLLLLETLGDKEPTIRALALKVLREILRHQPARFKNYAELTVMKTLEAHKDPHKEVVRSAEEAASVLATSISPEQCIKVLCPIIQTADYPINLAAIKMQTKVIERVSKETLNLLLPEIMPGLIQGYDNSESSVRKACVFCLVAVHAVIGDELKPHLSQLTGSKMKLLNLYIKRAQTGSGGADPTTDVSGQS.

Residues 1–61 (MAMGDDKSFD…KVGGASKEGG (61 aa)) are disordered. Residues serine 8 and serine 14 each carry the phosphoserine modification. Gly residues predominate over residues 47-61 (SAGGPKVGGASKEGG). Residues 60 to 311 (GGAGAVDEDD…KSLQTYLKSS (252 aa)) are TOG 1. 3 HEAT repeats span residues 173-208 (HGAE…IRHT), 209-245 (HVPR…EWQT), and 250-287 (RHAA…HFPG). The tract at residues 314–368 (VASLPQSDRSSSSSQESLNRPFSSKWSTANPSTVAGRVSAGSSKASSLPGSLQRS) is disordered. Phosphoserine occurs at positions 316, 327, and 330. The segment covering 316–334 (SLPQSDRSSSSSQESLNRP) has biased composition (low complexity). Composition is skewed to polar residues over residues 335-346 (FSSKWSTANPST) and 353-367 (AGSS…SLQR). Serine 360, serine 368, serine 370, and serine 407 each carry phosphoserine. The tract at residues 409 to 467 (EDTSDKLDGTASEDGRVRAKLSAPLAGMGNAKADSRGRSRTKMVSQSQPGSRSGSPGRV) is disordered. Basic and acidic residues predominate over residues 411–425 (TSDKLDGTASEDGRV). An interaction with microtubules, MAPRE1 and MAPRE3 region spans residues 444–580 (RGRSRTKMVS…GPGYGISQSS (137 aa)). Over residues 453–467 (SQSQPGSRSGSPGRV) the composition is skewed to low complexity. Phosphoserine is present on residues serine 455, serine 459, serine 463, serine 478, and serine 489. The tract at residues 488–557 (ASAQKRSKIP…PLASRHHSRS (70 aa)) is disordered. An SXIP motif 1; mediates interaction with MAPRE1 and targeting to microtubule plus ends motif is present at residues 494-497 (SKIP). The residue at position 507 (serine 507) is a Phosphoserine. The SXIP motif 2; mediates interaction with MAPRE1 and targeting to microtubule plus ends signature appears at 517–520 (SRIP). Phosphoserine occurs at positions 525, 529, 585, 587, 596, 621, and 627. The tract at residues 617-645 (YGMHSDDDANSDASSACSERSYSSRNGSI) is disordered. Residues 627-641 (SDASSACSERSYSSR) show a composition bias toward low complexity. A TOG 2 region spans residues 649-881 (MRQTEDVAEV…TKLLHNHLRN (233 aa)). HEAT repeat units follow at residues 710 to 747 (RVFS…KMGA) and 772 to 809 (LQFN…QMDP). Phosphothreonine is present on threonine 787. Residues 872-1294 (TKLLHNHLRN…DPTTDVSGQS (423 aa)) form an interaction with RSN and localization to the Golgi and kinetochores region. 2 disordered regions span residues 878–928 (HLRN…FDYD) and 952–995 (SFRS…DSSQ). Polar residues-rich tracts occupy residues 880–892 (RNTG…SMGS) and 901–922 (SPAN…TLSP). Position 892 is a phosphoserine (serine 892). Phosphoserine is present on residues serine 952, serine 955, serine 1013, and serine 1029. Residues 955–972 (SQEDMNEPLKRDSKKDDG) are compositionally biased toward basic and acidic residues. The required for cortical localization stretch occupies residues 1017 to 1294 (RDYNPYNYSD…DPTTDVSGQS (278 aa)). HEAT repeat units follow at residues 1054 to 1091 (LDHS…TQEE), 1098 to 1135 (EHFK…HQPA), and 1216 to 1253 (LLLP…VIGD).

This sequence belongs to the CLASP family. Interacts with microtubules. Interacts with MAPRE1; probably required for targeting to the growing microtubule plus ends. Interacts with CLIP2, ERC1, MAPRE3, PHLDB2 and RSN. The interaction with ERC1 may be mediated by PHLDB2. Interacts with GCC2; recruits CLASP2 to Golgi membranes. Interacts with MACF1. Interacts with mtcl2 and MTCL1. In terms of processing, phosphorylated by GSK3B. Phosphorylation reduces MAPRE1 binding. Phosphorylation by GSK3B may negatively regulate binding to microtubule lattices in lamella. As to expression, brain-specific.

It localises to the cytoplasm. Its subcellular location is the cytoskeleton. It is found in the microtubule organizing center. The protein localises to the centrosome. The protein resides in the chromosome. It localises to the centromere. Its subcellular location is the kinetochore. It is found in the spindle. The protein localises to the golgi apparatus. The protein resides in the trans-Golgi network. It localises to the cell membrane. Its subcellular location is the cell projection. It is found in the ruffle membrane. The protein localises to the cell cortex. Its function is as follows. Microtubule plus-end tracking protein that promotes the stabilization of dynamic microtubules. Involved in the nucleation of noncentrosomal microtubules originating from the trans-Golgi network (TGN). Required for the polarization of the cytoplasmic microtubule arrays in migrating cells towards the leading edge of the cell. May act at the cell cortex to enhance the frequency of rescue of depolymerizing microtubules by attaching their plus-ends to cortical platforms composed of ERC1 and PHLDB2. This cortical microtubule stabilizing activity is regulated at least in part by phosphatidylinositol 3-kinase signaling. Also performs a similar stabilizing function at the kinetochore which is essential for the bipolar alignment of chromosomes on the mitotic spindle. Acts as a mediator of ERBB2-dependent stabilization of microtubules at the cell cortex. The sequence is that of CLIP-associating protein 2 (CLASP2) from Homo sapiens (Human).